The chain runs to 270 residues: Acyl-[acyl-carrier-protein]--UDP-N-acetylglucosamine O-acyltransferase (270 aa).

It belongs to the transferase hexapeptide repeat family. LpxA subfamily. In terms of assembly, homotrimer.

The protein resides in the cytoplasm. It carries out the reaction a (3R)-hydroxyacyl-[ACP] + UDP-N-acetyl-alpha-D-glucosamine = a UDP-3-O-[(3R)-3-hydroxyacyl]-N-acetyl-alpha-D-glucosamine + holo-[ACP]. The protein operates within glycolipid biosynthesis; lipid IV(A) biosynthesis; lipid IV(A) from (3R)-3-hydroxytetradecanoyl-[acyl-carrier-protein] and UDP-N-acetyl-alpha-D-glucosamine: step 1/6. Involved in the biosynthesis of lipid A, a phosphorylated glycolipid that anchors the lipopolysaccharide to the outer membrane of the cell. The chain is Acyl-[acyl-carrier-protein]--UDP-N-acetylglucosamine O-acyltransferase from Helicobacter pylori (strain HPAG1).